Consider the following 36-residue polypeptide: Photosystem I reaction center subunit VIII (36 aa).

The helical transmembrane segment at 8 to 28 (SVLVPLVGLIFPAMAMASLFL) threads the bilayer.

This sequence belongs to the PsaI family.

The protein resides in the plastid. It is found in the chloroplast thylakoid membrane. Functionally, may help in the organization of the PsaL subunit. The polypeptide is Photosystem I reaction center subunit VIII (Daucus carota (Wild carrot)).